The sequence spans 197 residues: MKPFTIHRGKTAGIDRANIDTDQIIPKQFLKRIERTGFGQFLFYDWRYLSDGTPNPEFELNRPENEGATILVADENFGCGSSREHAPWALQDYGFRVIIAPSFADIFYNNCLKNGLLPIRLDKEDVRYLLRQSERADYELTVSLEEQRVFDDEGFSRPFDIDPYRKQLLLKGWDEIDLTFVYEAHIAAYERRHCPRP.

Belongs to the LeuD family. LeuD type 1 subfamily. Heterodimer of LeuC and LeuD.

It carries out the reaction (2R,3S)-3-isopropylmalate = (2S)-2-isopropylmalate. The protein operates within amino-acid biosynthesis; L-leucine biosynthesis; L-leucine from 3-methyl-2-oxobutanoate: step 2/4. Functionally, catalyzes the isomerization between 2-isopropylmalate and 3-isopropylmalate, via the formation of 2-isopropylmaleate. The polypeptide is 3-isopropylmalate dehydratase small subunit (Geobacillus kaustophilus (strain HTA426)).